We begin with the raw amino-acid sequence, 156 residues long: Ribosomal RNA large subunit methyltransferase H (156 aa).

S-adenosyl-L-methionine-binding positions include leucine 73, glycine 104, and 123–128 (LSALTL).

This sequence belongs to the RNA methyltransferase RlmH family. Homodimer.

It is found in the cytoplasm. It catalyses the reaction pseudouridine(1915) in 23S rRNA + S-adenosyl-L-methionine = N(3)-methylpseudouridine(1915) in 23S rRNA + S-adenosyl-L-homocysteine + H(+). Specifically methylates the pseudouridine at position 1915 (m3Psi1915) in 23S rRNA. In Vibrio vulnificus (strain CMCP6), this protein is Ribosomal RNA large subunit methyltransferase H.